We begin with the raw amino-acid sequence, 408 residues long: Phosphoenolpyruvate/phosphate translocator 1, chloroplastic (408 aa).

A chloroplast-targeting transit peptide spans 1–85 (MQSSAVFSLS…SLDTNRFRTA (85 aa)). Position 86 is an N-acetylalanine (alanine 86). Helical transmembrane passes span 105 to 125 (VLEL…FNIY), 137 to 157 (MTVT…MWVL), 165 to 185 (ISGA…LGNL), 198 to 218 (FTHT…AMFL), 222 to 242 (PTPW…LASI), 283 to 303 (ITLF…VTFF), 324 to 346 (IYTK…YMIL), and 377 to 396 (VSPV…FLYS). The EamA domain occupies 124–241 (IYNKQVLKAL…PIVGGVALAS (118 aa)).

This sequence belongs to the TPT transporter family. PPT (TC 2.A.7.9) subfamily. In terms of tissue distribution, expressed in root columella, lateral root cap and root vasculature tissue. In leaves, highly expressed in xylem parenchyma cells. In flowers, expressed in sepals, petals, filaments of the stamens, anthers and stigma.

The protein localises to the plastid. Its subcellular location is the chloroplast membrane. Its function is as follows. Phosphoenolpyruvate/phosphate translocator that transports phosphoenolpyruvate (PEP), 2-phosphoglycerate, 3-phosphoglycerate and dihydroxyacetone phosphate. Imports PEP to the chloroplast stroma as one substrate of the shikimate pathway, from which aromatic amino acids and a variety of secondary products derive. Required for correct leaf mesophyll cell development and expression of chlorophyll a/b binding protein 3 (CAB3). The chain is Phosphoenolpyruvate/phosphate translocator 1, chloroplastic (PPT1) from Arabidopsis thaliana (Mouse-ear cress).